The following is a 613-amino-acid chain: ATP-dependent zinc metalloprotease FtsH (613 aa).

Over 1–4 the chain is Cytoplasmic; that stretch reads MVKN. The helical transmembrane segment at 5–25 threads the bilayer; sequence LIFWLVITVVLMSVFQNFNSS. The Extracellular portion of the chain corresponds to 26 to 98; it reads DTSNHRVDYS…VGEIPEEPSL (73 aa). The helical transmembrane segment at 99 to 119 threads the bilayer; sequence LISIFISWFPMLLLIGVWIFF. Residues 120–613 lie on the Cytoplasmic side of the membrane; it reads MRQMQMGGGK…WLEVDQKKDI (494 aa). ATP is bound at residue 192 to 199; sequence GPPGTGKT. His-414 lines the Zn(2+) pocket. The active site involves Glu-415. The Zn(2+) site is built by His-418 and Asp-492.

In the central section; belongs to the AAA ATPase family. The protein in the C-terminal section; belongs to the peptidase M41 family. Homohexamer. It depends on Zn(2+) as a cofactor.

The protein resides in the cell membrane. Its function is as follows. Acts as a processive, ATP-dependent zinc metallopeptidase for both cytoplasmic and membrane proteins. Plays a role in the quality control of integral membrane proteins. The chain is ATP-dependent zinc metalloprotease FtsH from Buchnera aphidicola subsp. Schizaphis graminum (strain Sg).